We begin with the raw amino-acid sequence, 501 residues long: Bifunctional purine biosynthesis protein PurH (501 aa).

The MGS-like domain occupies 1-144; that stretch reads MKKRALISVF…KNFKDVVVLS (144 aa).

It belongs to the PurH family.

It catalyses the reaction (6R)-10-formyltetrahydrofolate + 5-amino-1-(5-phospho-beta-D-ribosyl)imidazole-4-carboxamide = 5-formamido-1-(5-phospho-D-ribosyl)imidazole-4-carboxamide + (6S)-5,6,7,8-tetrahydrofolate. The catalysed reaction is IMP + H2O = 5-formamido-1-(5-phospho-D-ribosyl)imidazole-4-carboxamide. It functions in the pathway purine metabolism; IMP biosynthesis via de novo pathway; 5-formamido-1-(5-phospho-D-ribosyl)imidazole-4-carboxamide from 5-amino-1-(5-phospho-D-ribosyl)imidazole-4-carboxamide (10-formyl THF route): step 1/1. Its pathway is purine metabolism; IMP biosynthesis via de novo pathway; IMP from 5-formamido-1-(5-phospho-D-ribosyl)imidazole-4-carboxamide: step 1/1. The protein is Bifunctional purine biosynthesis protein PurH of Clostridium perfringens (strain SM101 / Type A).